The following is a 383-amino-acid chain: Fatty acid hydroxylase ahd1 (383 aa).

4 consecutive transmembrane segments (helical) span residues 84 to 104 (VMGLTTHFVTITMAIVFNKSW), 123 to 143 (TVHTWILLSTCQLLVIGLFAL), 172 to 192 (LIPVVLFNLVVVNTISNIIYY), and 214 to 236 (VAQWLVCLLMEDIGFYTVHRALH). The region spanning 217-341 (WLVCLLMEDI…VGLLDAIFKT (125 aa)) is the Fatty acid hydroxylase domain. A glycan (N-linked (GlcNAc...) asparagine) is linked at Asn-342.

This sequence belongs to the sterol desaturase family.

The protein resides in the membrane. Its pathway is secondary metabolite biosynthesis. Fatty acid hydroxylase; part of the gene cluster that mediates the biosynthesis of the glycolipid biosurfactant ustilagic acid (UA). UA is a secreted cellobiose glycolipid that is toxic for many microorganisms and confers biocontrol activity to U.maydis. UA consists of 15,16-dihydroxypalmitic or 2,15,16-trihydroxypalmitic acid, which is O-glycosidically linked to cellobiose at its terminal hydroxyl group. In addition, the cellobiose moiety is acetylated and acylated with a short-chain hydroxy fatty acid. UA biosynthesis starts with omega-hydroxylation of palmitic acid catalyzed by the cytochrome P450 monooxygenase cyp1. Terminal hydroxylation of palmitic acid precedes subterminal hydroxylation catalyzed by the cytochrome P450 monooxygenase cyp2. Sequential glucosylation of the hydroxy fatty acid is probably catalyzed by the glycosyltransferase ugt1. The cellobiose lipid is further decorated by acetylation of the proximal glucose residue and by acylation with a short-chain beta-hydroxy fatty acid at the distal glucose residue. The acyltransferase uat1 may be a good candidate for catalyzing either acetylation or acylation of the cellobiose lipid. The fatty acid synthase fas2 may be involved in synthesis of the carbon backbone of the short-chain beta-hydroxy fatty acid esterified to the cellobiose disaccharide. The secreted UA consists of a mixture of both alpha-hydroxylated and non-hydroxylated glycolipids; therefore, alpha-hydroxylation of the long-chain fatty, catalyzed by the fatty acid hydroxylase ahd1, occurs late in UA biosynthesis and may be the last step before secretion. In Mycosarcoma maydis (Corn smut fungus), this protein is Fatty acid hydroxylase ahd1.